Here is a 396-residue protein sequence, read N- to C-terminus: RNA binding protein fox-1 homolog 1 (396 aa).

The segment at 1 to 119 (MNCEREQLRG…ESKSQPKRLH (119 aa)) is disordered. Over residues 67-86 (PPTQTHSEQSADTSAQTVSG) the composition is skewed to polar residues. Over residues 87–98 (TATQTDDAAPTD) the composition is skewed to low complexity. Residues 99 to 112 (GQPQTQPSENTESK) show a composition bias toward polar residues. An RRM domain is found at 116–192 (KRLHVSNIPF…RKIEVNNATA (77 aa)). Asymmetric dimethylarginine is present on residues arginine 316 and alanine 337. Arginine 387 is subject to Omega-N-methylarginine.

Binds to the C-terminus of ATXN2. Detected in brain (at protein level). Detected in heart, brain, neurons, skeletal muscle and embryo.

It is found in the nucleus. It localises to the cytoplasm. Functionally, RNA-binding protein that regulates alternative splicing events by binding to 5'-UGCAUGU-3' elements. Prevents binding of U2AF2 to the 3'-splice site. Regulates alternative splicing of tissue-specific exons and of differentially spliced exons during erythropoiesis. This is RNA binding protein fox-1 homolog 1 (Rbfox1) from Mus musculus (Mouse).